Reading from the N-terminus, the 423-residue chain is Serine hydroxymethyltransferase (423 aa).

Residues Leu120 and 124-126 (GHL) contribute to the (6S)-5,6,7,8-tetrahydrofolate site. At Lys229 the chain carries N6-(pyridoxal phosphate)lysine. Residues Glu245 and 353-355 (SPF) each bind (6S)-5,6,7,8-tetrahydrofolate.

This sequence belongs to the SHMT family. In terms of assembly, homodimer. The cofactor is pyridoxal 5'-phosphate.

The protein localises to the cytoplasm. The enzyme catalyses (6R)-5,10-methylene-5,6,7,8-tetrahydrofolate + glycine + H2O = (6S)-5,6,7,8-tetrahydrofolate + L-serine. The protein operates within one-carbon metabolism; tetrahydrofolate interconversion. It participates in amino-acid biosynthesis; glycine biosynthesis; glycine from L-serine: step 1/1. Functionally, catalyzes the reversible interconversion of serine and glycine with tetrahydrofolate (THF) serving as the one-carbon carrier. This reaction serves as the major source of one-carbon groups required for the biosynthesis of purines, thymidylate, methionine, and other important biomolecules. Also exhibits THF-independent aldolase activity toward beta-hydroxyamino acids, producing glycine and aldehydes, via a retro-aldol mechanism. This Prochlorococcus marinus (strain MIT 9312) protein is Serine hydroxymethyltransferase.